Reading from the N-terminus, the 307-residue chain is Methionyl-tRNA formyltransferase (307 aa).

Serine 108–proline 111 is a (6S)-5,6,7,8-tetrahydrofolate binding site.

The protein belongs to the Fmt family.

The enzyme catalyses L-methionyl-tRNA(fMet) + (6R)-10-formyltetrahydrofolate = N-formyl-L-methionyl-tRNA(fMet) + (6S)-5,6,7,8-tetrahydrofolate + H(+). Attaches a formyl group to the free amino group of methionyl-tRNA(fMet). The formyl group appears to play a dual role in the initiator identity of N-formylmethionyl-tRNA by promoting its recognition by IF2 and preventing the misappropriation of this tRNA by the elongation apparatus. This Stenotrophomonas maltophilia (strain K279a) protein is Methionyl-tRNA formyltransferase.